Here is a 674-residue protein sequence, read N- to C-terminus: Tripartite terminase subunit 3 (674 aa).

The Walker A motif signature appears at 212–219 (VPRRHGKT). The Walker B motif motif lies at 305-310 (LLLVDE). E310 acts as the For ATPase activity in catalysis. Residues D463, E534, and D651 each act as for nuclease activity in the active site.

The protein belongs to the herpesviridae TRM3 protein family. As to quaternary structure, interacts with the terminase subunits TRM1 and TRM2. Interacts with portal protein.

Its subcellular location is the host nucleus. Functionally, component of the molecular motor that translocates viral genomic DNA in empty capsid during DNA packaging. Forms a tripartite terminase complex together with TRM1 and TRM2 in the host cytoplasm. Once the complex reaches the host nucleus, it interacts with the capsid portal vertex. This portal forms a ring in which genomic DNA is translocated into the capsid. TRM3 carries an RNase H-like nuclease activity that plays an important role for the cleavage of concatemeric viral DNA into unit length genomes. This is Tripartite terminase subunit 3 from Homo sapiens (Human).